Consider the following 144-residue polypeptide: Catabolic 3-dehydroquinase (144 aa).

Tyrosine 24 functions as the Proton acceptor in the catalytic mechanism. Substrate-binding residues include asparagine 76, histidine 82, and aspartate 89. The active-site Proton donor is the histidine 102. Substrate is bound by residues isoleucine 103–threonine 104 and arginine 113.

This sequence belongs to the type-II 3-dehydroquinase family. In terms of assembly, homododecamer. Adopts a ring-like structure, composed of an arrangement of two hexameric rings stacked on top of one another.

It catalyses the reaction 3-dehydroquinate = 3-dehydroshikimate + H2O. Its pathway is aromatic compound metabolism; 3,4-dihydroxybenzoate biosynthesis; 3,4-dihydroxybenzoate from 3-dehydroquinate: step 1/2. Its function is as follows. Is involved in the catabolism of quinate. Allows the utilization of quinate as carbon source via the beta-ketoadipate pathway. This chain is Catabolic 3-dehydroquinase, found in Debaryomyces hansenii (strain ATCC 36239 / CBS 767 / BCRC 21394 / JCM 1990 / NBRC 0083 / IGC 2968) (Yeast).